We begin with the raw amino-acid sequence, 219 residues long: 3-dehydroquinate dehydratase (219 aa).

Residues Ser10, 29 to 31, and Arg59 each bind 3-dehydroquinate; that span reads EVR. The Proton donor/acceptor role is filled by His116. Lys142 serves as the catalytic Schiff-base intermediate with substrate. Positions 180 and 203 each coordinate 3-dehydroquinate.

Belongs to the type-I 3-dehydroquinase family. Homodimer.

The catalysed reaction is 3-dehydroquinate = 3-dehydroshikimate + H2O. It participates in metabolic intermediate biosynthesis; chorismate biosynthesis; chorismate from D-erythrose 4-phosphate and phosphoenolpyruvate: step 3/7. Functionally, involved in the third step of the chorismate pathway, which leads to the biosynthesis of aromatic amino acids. Catalyzes the cis-dehydration of 3-dehydroquinate (DHQ) and introduces the first double bond of the aromatic ring to yield 3-dehydroshikimate. The polypeptide is 3-dehydroquinate dehydratase (Methanocella arvoryzae (strain DSM 22066 / NBRC 105507 / MRE50)).